We begin with the raw amino-acid sequence, 76 residues long: ATP synthase subunit 9, mitochondrial (76 aa).

The next 2 helical transmembrane spans lie at 14 to 34 (IATL…VALI) and 52 to 72 (ILGF…SFLL).

Belongs to the ATPase C chain family. As to quaternary structure, F-type ATPases have 2 components, CF(1) - the catalytic core - and CF(0) - the membrane proton channel. CF(1) has five subunits: alpha(3), beta(3), gamma(1), delta(1), epsilon(1). CF(0) has three main subunits: a, b and c.

Its subcellular location is the mitochondrion membrane. Its function is as follows. Mitochondrial membrane ATP synthase (F(1)F(0) ATP synthase or Complex V) produces ATP from ADP in the presence of a proton gradient across the membrane which is generated by electron transport complexes of the respiratory chain. F-type ATPases consist of two structural domains, F(1) - containing the extramembraneous catalytic core and F(0) - containing the membrane proton channel, linked together by a central stalk and a peripheral stalk. During catalysis, ATP synthesis in the catalytic domain of F(1) is coupled via a rotary mechanism of the central stalk subunits to proton translocation. Part of the complex F(0) domain. A homomeric c-ring of probably 10 subunits is part of the complex rotary element. The polypeptide is ATP synthase subunit 9, mitochondrial (ATP9) (Candida albicans (strain SC5314 / ATCC MYA-2876) (Yeast)).